A 147-amino-acid polypeptide reads, in one-letter code: Small ribosomal subunit protein uS12 (147 aa).

This sequence belongs to the universal ribosomal protein uS12 family. Part of the 30S ribosomal subunit.

Functionally, with S4 and S5 plays an important role in translational accuracy. Located at the interface of the 30S and 50S subunits. The chain is Small ribosomal subunit protein uS12 from Methanococcus maripaludis (strain C5 / ATCC BAA-1333).